The sequence spans 306 residues: Heme A synthase (306 aa).

Residues 1–5 (MKALR) are Cytoplasmic-facing. The helical transmembrane segment at 6–26 (AVSLANTAVMLLAVLWGAWVT) threads the bilayer. Over 27–56 (SSDSGDGCGASWPLCKGTFMPDWDYAAIVE) the chain is Extracellular. A disulfide bond links C34 and C41. E56 is an active-site residue. A helical membrane pass occupies residues 57 to 77 (FGHRVVSALAGLLSVAVLVWV). H59 contributes to the heme o binding site. The Cytoplasmic portion of the chain corresponds to 78-89 (ARVRPSETRLKR). Residues 90–110 (LAFGTFFFVVLQGGLGAAAVL) form a helical membrane-spanning segment. The Extracellular portion of the chain corresponds to 111-116 (RPQPDL). A helical transmembrane segment spans residues 117 to 137 (VMALHFGFSLLCFTFALLVTV). Position 121 (H121) interacts with heme o. Over 138-164 (ALGQGERAAFQRPDVSAQPVAPGLRTQ) the chain is Cytoplasmic. The helical transmembrane segment at 165–185 (IWGLAVYTYLVVYLGAYVRHL) threads the bilayer. At 186 to 206 (GASMACTGWPLCNGELIPPLY) the chain is on the extracellular side. C191 and C197 are disulfide-bonded. Residues 207 to 227 (GPVGANFAHRLGAALAVVLVL) traverse the membrane as a helical segment. H215 serves as a coordination point for heme b. Residues 228-247 (RLWWTARRLTERDDLRRGAA) are Cytoplasmic-facing. Residues 248–268 (WALALMAAQVASGALFPLGYL) traverse the membrane as a helical segment. Over 269–277 (NLLTQLLHT) the chain is Extracellular. Position 276 (H276) interacts with heme b. A helical transmembrane segment spans residues 278 to 298 (GLITGFWGVLSYLCYLTLPVG). Over 299–306 (RETVAVSA) the chain is Cytoplasmic.

This sequence belongs to the COX15/CtaA family. Type 1 subfamily. Interacts with CtaB. Requires heme b as cofactor.

It localises to the cell membrane. The enzyme catalyses Fe(II)-heme o + 2 A + H2O = Fe(II)-heme a + 2 AH2. It functions in the pathway porphyrin-containing compound metabolism; heme A biosynthesis; heme A from heme O: step 1/1. Functionally, catalyzes the conversion of heme O to heme A by two successive hydroxylations of the methyl group at C8. The first hydroxylation forms heme I, the second hydroxylation results in an unstable dihydroxymethyl group, which spontaneously dehydrates, resulting in the formyl group of heme A. The chain is Heme A synthase from Symbiobacterium thermophilum (strain DSM 24528 / JCM 14929 / IAM 14863 / T).